The following is a 592-amino-acid chain: V-type ATP synthase alpha chain 1 (592 aa).

233–240 (GPFGSGKT) serves as a coordination point for ATP.

The protein belongs to the ATPase alpha/beta chains family.

It carries out the reaction ATP + H2O + 4 H(+)(in) = ADP + phosphate + 5 H(+)(out). Its function is as follows. Produces ATP from ADP in the presence of a proton gradient across the membrane. The V-type alpha chain is a catalytic subunit. The chain is V-type ATP synthase alpha chain 1 from Clostridium tetani (strain Massachusetts / E88).